The following is a 358-amino-acid chain: Methionine aminopeptidase 2 (358 aa).

Residue His111 participates in substrate binding. 3 residues coordinate a divalent metal cation: Asp131, Asp142, and His211. His219 provides a ligand contact to substrate. Positions 244 and 339 each coordinate a divalent metal cation.

This sequence belongs to the peptidase M24A family. Methionine aminopeptidase eukaryotic type 2 subfamily. Co(2+) is required as a cofactor. It depends on Zn(2+) as a cofactor. The cofactor is Mn(2+). Requires Fe(2+) as cofactor.

It is found in the cytoplasm. It carries out the reaction Release of N-terminal amino acids, preferentially methionine, from peptides and arylamides.. In terms of biological role, cotranslationally removes the N-terminal methionine from nascent proteins. The N-terminal methionine is often cleaved when the second residue in the primary sequence is small and uncharged (Met-Ala-, Cys, Gly, Pro, Ser, Thr, or Val). The chain is Methionine aminopeptidase 2 from Laccaria bicolor (strain S238N-H82 / ATCC MYA-4686) (Bicoloured deceiver).